Here is a 215-residue protein sequence, read N- to C-terminus: Riboflavin synthase (215 aa).

Lumazine-binding repeat units follow at residues 1 to 96 and 97 to 193; these read MFTG…FGGH and IVSG…EQFL. Residues 4–6, 47–49, 61–66, 100–102, Lys-135, 144–146, and 158–163 contribute to the 2,4-dihydroxypteridine site; these read GII, CLT, DVMSET, GHI, SLT, and SIIPHT.

Homotrimer.

It catalyses the reaction 2 6,7-dimethyl-8-(1-D-ribityl)lumazine + H(+) = 5-amino-6-(D-ribitylamino)uracil + riboflavin. Its pathway is cofactor biosynthesis; riboflavin biosynthesis; riboflavin from 2-hydroxy-3-oxobutyl phosphate and 5-amino-6-(D-ribitylamino)uracil: step 2/2. In terms of biological role, catalyzes the dismutation of two molecules of 6,7-dimethyl-8-ribityllumazine, resulting in the formation of riboflavin and 5-amino-6-(D-ribitylamino)uracil. This is Riboflavin synthase (ribE) from Actinobacillus pleuropneumoniae (Haemophilus pleuropneumoniae).